The primary structure comprises 528 residues: UDP-glucuronosyltransferase 2B30 (528 aa).

An N-terminal signal peptide occupies residues 1-23 (MSMKWTSALLLIQLSCYLSSGNC). Residue lysine 135 is modified to N6-succinyllysine. An N-linked (GlcNAc...) asparagine glycan is attached at asparagine 315. A helical transmembrane segment spans residues 493–513 (VIGFLLACVATVIFIITKCLF).

The protein belongs to the UDP-glycosyltransferase family. In terms of tissue distribution, expressed in several tissues, including prostate, testis, mammary gland, kidney, adrenals and intestine.

It localises to the microsome membrane. The protein resides in the endoplasmic reticulum membrane. It catalyses the reaction glucuronate acceptor + UDP-alpha-D-glucuronate = acceptor beta-D-glucuronoside + UDP + H(+). Its function is as follows. UDPGTs are of major importance in the conjugation and subsequent elimination of potentially toxic xenobiotics and endogenous compounds. This isozyme has glucuronidating capacity on testosterone, dihydrotestosterone, 5-alpha-androstane-3-alpha,17-beta-diol, androsterone, oestradiol, tetrahydroaldosterone and tetrahydrocortisone. This enzyme is essential to inactivation of several steroids. This Macaca fascicularis (Crab-eating macaque) protein is UDP-glucuronosyltransferase 2B30 (UGT2B30).